The sequence spans 763 residues: Sphingoid long-chain bases kinase 1 (763 aa).

Positions 34 to 81 (TGGSQQSSPIVFPEKRNKKVKASSRRGEVTNDPQVKPKPDEHRIDIGG) are disordered. Residues 58–81 (RRGEVTNDPQVKPKPDEHRIDIGG) show a composition bias toward basic and acidic residues. In terms of domain architecture, DAGKc spans 245-384 (KSAPKMLVIL…TDVFAVEWIH (140 aa)). ATP is bound by residues 255–257 (NPR) and T287. Residue 313–316 (GGDG) coordinates substrate. D315 serves as the catalytic Proton donor/acceptor. ATP contacts are provided by residues E320, 345-347 (GSD), and R418. The segment at 561–603 (MGLTSVQDPPTRCSWGNTGGQDREDISSTVSDPGPIWDAGPKW) is disordered. 733-735 (DGE) contributes to the ATP binding site.

In terms of tissue distribution, expressed in roots, stems, leaves and at higher levels in flowers.

Its function is as follows. Involved in the production of sphingolipid metabolites. Active on sphingosine, phytosphingosine (PHS, 4-hydroxysphinganine), D-erythro-dihydrosphingosine, D-erythro-sphingosine and trans-4, trans-8-sphingadienine, an LCB found exclusively in plants, but not on N-acetyl-dihydrosphingosine (C2-dihydroceramide) and D-threo-dihydrosphingosine. The protein is Sphingoid long-chain bases kinase 1 (LCBK1) of Arabidopsis thaliana (Mouse-ear cress).